Here is a 220-residue protein sequence, read N- to C-terminus: Adapter protein MecA (220 aa).

Belongs to the MecA family. As to quaternary structure, homodimer.

Enables the recognition and targeting of unfolded and aggregated proteins to the ClpC protease or to other proteins involved in proteolysis. The protein is Adapter protein MecA of Enterococcus faecalis (strain ATCC 700802 / V583).